The chain runs to 222 residues: Peptidyl-prolyl cis-trans isomerase FKBP7 (222 aa).

Positions 1–23 (MPKTMHFLFRFIVFFYLWGLFTA) are cleaved as a signal peptide. Asn45 carries N-linked (GlcNAc...) asparagine glycosylation. A PPIase FKBP-type domain is found at 53–145 (GDLLNAHYDG…IFEIELYAVT (93 aa)). 2 consecutive EF-hand domains span residues 145 to 180 (TKGP…EFEK) and 189 to 222 (YQDA…HDEL). Ca(2+)-binding residues include Asp158, Asp160, Asp162, Gln164, Glu169, Asp202, Asp204, Asp206, and Glu213. The disordered stretch occupies residues 200–222 (KNDHDGDGFISPKEYNVYQHDEL). The short motif at 219-222 (HDEL) is the Retention in the endoplasmic reticulum element.

Glycosylated.

It localises to the endoplasmic reticulum lumen. It catalyses the reaction [protein]-peptidylproline (omega=180) = [protein]-peptidylproline (omega=0). Functionally, PPIases accelerate the folding of proteins during protein synthesis. In Homo sapiens (Human), this protein is Peptidyl-prolyl cis-trans isomerase FKBP7 (FKBP7).